The chain runs to 126 residues: Fatty acid-binding protein 10-A, liver basic (126 aa).

Residues K57, K77, H99, and Q101 each coordinate cholate.

Belongs to the calycin superfamily. Fatty-acid binding protein (FABP) family. In terms of tissue distribution, expressed in the developing embryonic liver from 48 hpf. Also expressed in the liver of 5-day-old larvae. In adults, primarily expressed in the liver, with weak expression in the testis and intestine.

The protein resides in the cytoplasm. Its function is as follows. Binds hydrophobic ligands, such as cholate, in the cytoplasm. May be involved in intracellular lipid transport. Binds one cholate per subunit. This Danio rerio (Zebrafish) protein is Fatty acid-binding protein 10-A, liver basic (fabp10a).